A 410-amino-acid chain; its full sequence is 26S proteasome non-ATPase regulatory subunit 6 (410 aa).

Residues 207-382 form the PCI domain; it reads DFAGAADLFL…GVIEVNHRDS (176 aa).

This sequence belongs to the proteasome subunit S10 family. Expressed in multiple tissues including the intestine, pharynx and hypodermis.

Acts as a regulatory subunit of the 26S proteasome which is involved in the ATP-dependent degradation of ubiquitinated proteins. The sequence is that of 26S proteasome non-ATPase regulatory subunit 6 (rpn-7) from Caenorhabditis elegans.